The primary structure comprises 466 residues: 3-isopropylmalate dehydratase large subunit (466 aa).

[4Fe-4S] cluster is bound by residues Cys-347, Cys-407, and Cys-410.

It belongs to the aconitase/IPM isomerase family. LeuC type 1 subfamily. As to quaternary structure, heterodimer of LeuC and LeuD. [4Fe-4S] cluster serves as cofactor.

The catalysed reaction is (2R,3S)-3-isopropylmalate = (2S)-2-isopropylmalate. It functions in the pathway amino-acid biosynthesis; L-leucine biosynthesis; L-leucine from 3-methyl-2-oxobutanoate: step 2/4. Functionally, catalyzes the isomerization between 2-isopropylmalate and 3-isopropylmalate, via the formation of 2-isopropylmaleate. The chain is 3-isopropylmalate dehydratase large subunit from Shewanella pealeana (strain ATCC 700345 / ANG-SQ1).